A 275-amino-acid polypeptide reads, in one-letter code: Increased recombination centers protein 6 (275 aa).

The protein belongs to the IRC6 family.

In terms of biological role, involved in gross chromosomal rearrangements (GCRs) and telomere healing. The sequence is that of Increased recombination centers protein 6 (IRC6) from Candida dubliniensis (strain CD36 / ATCC MYA-646 / CBS 7987 / NCPF 3949 / NRRL Y-17841) (Yeast).